The chain runs to 396 residues: S-adenosylmethionine synthase (396 aa).

Residue His-16 coordinates ATP. Residue Asp-18 participates in Mg(2+) binding. K(+) is bound at residue Glu-44. L-methionine contacts are provided by Glu-57 and Gln-100. The tract at residues 100-110 (QSVDIAQGVDR) is flexible loop. Residues 165 to 167 (DAK), Asp-240, 246 to 247 (RK), Ala-263, and Lys-267 contribute to the ATP site. L-methionine is bound at residue Asp-240. Lys-271 provides a ligand contact to L-methionine.

Belongs to the AdoMet synthase family. As to quaternary structure, homotetramer; dimer of dimers. Mg(2+) serves as cofactor. K(+) is required as a cofactor.

The protein resides in the cytoplasm. The catalysed reaction is L-methionine + ATP + H2O = S-adenosyl-L-methionine + phosphate + diphosphate. Its pathway is amino-acid biosynthesis; S-adenosyl-L-methionine biosynthesis; S-adenosyl-L-methionine from L-methionine: step 1/1. Its function is as follows. Catalyzes the formation of S-adenosylmethionine (AdoMet) from methionine and ATP. The overall synthetic reaction is composed of two sequential steps, AdoMet formation and the subsequent tripolyphosphate hydrolysis which occurs prior to release of AdoMet from the enzyme. The protein is S-adenosylmethionine synthase of Pseudomonas putida (strain ATCC 700007 / DSM 6899 / JCM 31910 / BCRC 17059 / LMG 24140 / F1).